Reading from the N-terminus, the 521-residue chain is Bifunctional purine biosynthesis protein PurH (521 aa).

An MGS-like domain is found at 1–145 (MIKQALISVS…KNHRDVTVVV (145 aa)).

The protein belongs to the PurH family.

It catalyses the reaction (6R)-10-formyltetrahydrofolate + 5-amino-1-(5-phospho-beta-D-ribosyl)imidazole-4-carboxamide = 5-formamido-1-(5-phospho-D-ribosyl)imidazole-4-carboxamide + (6S)-5,6,7,8-tetrahydrofolate. The catalysed reaction is IMP + H2O = 5-formamido-1-(5-phospho-D-ribosyl)imidazole-4-carboxamide. Its pathway is purine metabolism; IMP biosynthesis via de novo pathway; 5-formamido-1-(5-phospho-D-ribosyl)imidazole-4-carboxamide from 5-amino-1-(5-phospho-D-ribosyl)imidazole-4-carboxamide (10-formyl THF route): step 1/1. It participates in purine metabolism; IMP biosynthesis via de novo pathway; IMP from 5-formamido-1-(5-phospho-D-ribosyl)imidazole-4-carboxamide: step 1/1. The polypeptide is Bifunctional purine biosynthesis protein PurH (Burkholderia orbicola (strain AU 1054)).